The following is a 399-amino-acid chain: Bombesin receptor subtype-3 (399 aa).

The Extracellular portion of the chain corresponds to 1-41 (MSQKQPQSPNQTLISITNDTESSSSVVSNDTTNKGWTGDNS). 2 N-linked (GlcNAc...) asparagine glycosylation sites follow: Asn10 and Asn18. Residues 42-63 (PGIEALCAIYITYAVIISVGIL) form a helical membrane-spanning segment. Residues 64–82 (GNAILIKVFFKTKSMQTVP) are Cytoplasmic-facing. Residues 83–103 (NIFITSLALGDLLLLLTCVPV) form a helical membrane-spanning segment. Residues 104 to 121 (DATHYLAEGWLFGRIGCK) are Extracellular-facing. Cys120 and Cys203 are disulfide-bonded. A helical transmembrane segment spans residues 122-143 (VLSFIRLTSVGVSVFTLTILSA). At 144–163 (DRYKAVVKPLERQPSNAILK) the chain is on the cytoplasmic side. The chain crosses the membrane as a helical span at residues 164–184 (TCAKAGCIWIMSMIFALPEAI). Residues 185-220 (FSNVHTLRDPNKNMTSEWCAFYPVSEKLLQEIHALL) lie on the Extracellular side of the membrane. A helical membrane pass occupies residues 221–241 (SFLVFYIIPLSIISVYYSLIA). At 242-272 (RTLYKSTLNIPTEEQSHARKQVESRKRIAKT) the chain is on the cytoplasmic side. The helical transmembrane segment at 273-293 (VLVLVALFALCWLPNHLLNLY) threads the bilayer. Residues 294 to 313 (HSFTHKAYEDSSAIHFIVTI) lie on the Extracellular side of the membrane. The chain crosses the membrane as a helical span at residues 314–333 (FSRVLAFSNSCVNPFALYWL). The Cytoplasmic segment spans residues 334–399 (SKTFQKQFKA…RPMKKEENRV (66 aa)). Cys347 carries S-palmitoyl cysteine lipidation.

It belongs to the G-protein coupled receptor 1 family. Interacts with C6orf89. Mainly in uteri of pregnant animals.

It is found in the cell membrane. Functionally, role in sperm cell division, maturation, or function. The relative order of ligand affinity is GRP = neuromedin-C &gt;&gt; neuromedin-B. This receptor mediates its action by association with G proteins that activate a phosphatidylinositol-calcium second messenger system. This Cavia porcellus (Guinea pig) protein is Bombesin receptor subtype-3 (BRS3).